A 638-amino-acid chain; its full sequence is 3D-(3,5/4)-trihydroxycyclohexane-1,2-dione hydrolase (638 aa).

Position 67 (glutamate 67) interacts with thiamine diphosphate. Residues 442–523 form a thiamine pyrophosphate binding region; the sequence is SLPGDLQRLW…INIMLFDNSG (82 aa). 2 residues coordinate Mg(2+): aspartate 494 and asparagine 521.

It belongs to the TPP enzyme family. Mg(2+) is required as a cofactor. It depends on thiamine diphosphate as a cofactor.

The catalysed reaction is 3D-3,5/4-trihydroxycyclohexane-1,2-dione + H2O = 5-deoxy-D-glucuronate + H(+). It functions in the pathway polyol metabolism; myo-inositol degradation into acetyl-CoA; acetyl-CoA from myo-inositol: step 3/7. Functionally, involved in the cleavage of the C1-C2 bond of 3D-(3,5/4)-trihydroxycyclohexane-1,2-dione (THcHDO) to yield 5-deoxy-glucuronate (5DG). This Listeria monocytogenes serovar 1/2a (strain ATCC BAA-679 / EGD-e) protein is 3D-(3,5/4)-trihydroxycyclohexane-1,2-dione hydrolase.